An 80-amino-acid chain; its full sequence is Trefoil factor 3 (80 aa).

Positions 1-21 are cleaved as a signal peptide; sequence MEARMFWLLVVLLALASSSSA. Residues 30–73 form the P-type domain; sequence NQCAVPAKDRVDCGYPQVTPEQCNNRGCCFDSSIXGVPWCFKPL. Disulfide bonds link C32/C58, C42/C57, and C52/C69.

In terms of assembly, monomer. Homodimer; disulfide-linked.

It localises to the secreted. It is found in the extracellular space. The protein localises to the extracellular matrix. Its subcellular location is the cytoplasm. Involved in the maintenance and repair of the intestinal mucosa. Promotes the mobility of epithelial cells in healing processes (motogen). This Sus scrofa (Pig) protein is Trefoil factor 3 (TFF3).